The sequence spans 506 residues: Squalene monooxygenase 1,1 (506 aa).

Transmembrane regions (helical) follow at residues 3-23 (LAFP…WTVF) and 47-67 (DADV…YALA). FAD is bound by residues 57–58 (VG), 77–78 (ER), R85, F90, R157, V173, D336, and M349. Residues 447–467 (LIFHLCGITLSSIGQLLSPFP) traverse the membrane as a helical segment.

Belongs to the squalene monooxygenase family. FAD serves as cofactor.

It is found in the membrane. It catalyses the reaction squalene + reduced [NADPH--hemoprotein reductase] + O2 = (S)-2,3-epoxysqualene + oxidized [NADPH--hemoprotein reductase] + H2O + H(+). It participates in terpene metabolism; lanosterol biosynthesis; lanosterol from farnesyl diphosphate: step 2/3. Catalyzes the stereospecific oxidation of squalene to (S)-2,3-epoxysqualene, and is considered to be a rate-limiting enzyme in steroid biosynthesis. The protein is Squalene monooxygenase 1,1 (SQP1,1) of Brassica napus (Rape).